We begin with the raw amino-acid sequence, 337 residues long: Glyceraldehyde-3-phosphate dehydrogenase 1, cytosolic (337 aa).

Residues arginine 13 to isoleucine 14, aspartate 35, and arginine 82 contribute to the NAD(+) site. Residues serine 153–threonine 155, threonine 184, threonine 213–glycine 214, and arginine 236 each bind D-glyceraldehyde 3-phosphate. Cysteine 154 acts as the Nucleophile in catalysis. Asparagine 318 contributes to the NAD(+) binding site.

Belongs to the glyceraldehyde-3-phosphate dehydrogenase family. Homotetramer.

Its subcellular location is the cytoplasm. It carries out the reaction D-glyceraldehyde 3-phosphate + phosphate + NAD(+) = (2R)-3-phospho-glyceroyl phosphate + NADH + H(+). It functions in the pathway carbohydrate degradation; glycolysis; pyruvate from D-glyceraldehyde 3-phosphate: step 1/5. Key enzyme in glycolysis that catalyzes the first step of the pathway by converting D-glyceraldehyde 3-phosphate (G3P) into 3-phospho-D-glyceroyl phosphate. Essential for the maintenance of cellular ATP levels and carbohydrate metabolism. In Hordeum vulgare (Barley), this protein is Glyceraldehyde-3-phosphate dehydrogenase 1, cytosolic (GAPC).